The sequence spans 355 residues: WD repeat domain phosphoinositide-interacting protein 4 (355 aa).

WD repeat units follow at residues S2–H40 and A185–E225. Residues L226 to G229 carry the L/FRRG motif motif. The stretch at T230–R269 is one WD 3 repeat.

This sequence belongs to the WD repeat PROPPIN family.

Its subcellular location is the preautophagosomal structure. In terms of biological role, component of the autophagy machinery that controls the major intracellular degradation process by which cytoplasmic materials are packaged into autophagosomes and delivered to lysosomes for degradation. Binds phosphatidylinositol 3-phosphate (PtdIns3P). The protein is WD repeat domain phosphoinositide-interacting protein 4 (wdr45) of Xenopus laevis (African clawed frog).